The following is a 780-amino-acid chain: Aconitate hydratase, mitochondrial (780 aa).

The transit peptide at 1 to 27 (MAPYSLLVSRLQKALGARQYHVASVLC) directs the protein to the mitochondrion. Residue Lys31 is modified to N6-succinyllysine. Lys50 carries the N6-acetyllysine; alternate modification. Lys50 carries the post-translational modification N6-succinyllysine; alternate. Position 99 (Gln99) interacts with substrate. Lys138 and Lys144 each carry N6-acetyllysine; alternate. N6-succinyllysine; alternate occurs at positions 138 and 144. Residue 192–194 (DSH) coordinates substrate. The residue at position 233 (Lys233) is an N6-acetyllysine; alternate. Lys233 is modified (N6-succinyllysine; alternate). Cys385 is a [4Fe-4S] cluster binding site. An N6-succinyllysine modification is found at Lys411. Positions 448 and 451 each coordinate [4Fe-4S] cluster. Substrate contacts are provided by Arg474 and Arg479. An N6-acetyllysine; alternate mark is found at Lys517 and Lys523. Lys517 and Lys523 each carry N6-succinyllysine; alternate. Residues 524–537 (LEAPDADELPRAEF) are compositionally biased toward basic and acidic residues. Positions 524–560 (LEAPDADELPRAEFDPGQDTYQHPPKDSSGQQVDVSP) are disordered. An N6-succinyllysine modification is found at Lys549. Residues 551 to 560 (SSGQQVDVSP) are compositionally biased toward polar residues. Residue Ser559 is modified to Phosphoserine. Lys573 carries the N6-acetyllysine; alternate modification. Lys573 carries the post-translational modification N6-succinyllysine; alternate. Position 591 is an N6-succinyllysine (Lys591). Lys605 is modified (N6-acetyllysine; alternate). Position 605 is an N6-succinyllysine; alternate (Lys605). Position 607 (Arg607) interacts with substrate. Residue Lys628 is modified to N6-succinyllysine. Phosphoserine is present on Ser670. Residue 670–671 (SR) coordinates substrate. Lys689 is modified (N6-succinyllysine). N6-acetyllysine; alternate is present on residues Lys723 and Lys730. An N6-succinyllysine; alternate mark is found at Lys723 and Lys730. An N6-acetyllysine mark is found at Lys736 and Lys743.

The protein belongs to the aconitase/IPM isomerase family. Monomer. Requires [4Fe-4S] cluster as cofactor. Post-translationally, forms covalent cross-links mediated by transglutaminase TGM2, between a glutamine and the epsilon-amino group of a lysine residue, forming homopolymers and heteropolymers.

The protein localises to the mitochondrion. The catalysed reaction is citrate = D-threo-isocitrate. Its pathway is carbohydrate metabolism; tricarboxylic acid cycle; isocitrate from oxaloacetate: step 2/2. In terms of biological role, catalyzes the isomerization of citrate to isocitrate via cis-aconitate. The sequence is that of Aconitate hydratase, mitochondrial (ACO2) from Bos taurus (Bovine).